A 356-amino-acid chain; its full sequence is Protein RecA (356 aa).

75-82 is an ATP binding site; it reads GPESSGKT.

The protein belongs to the RecA family.

The protein resides in the cytoplasm. Its function is as follows. Can catalyze the hydrolysis of ATP in the presence of single-stranded DNA, the ATP-dependent uptake of single-stranded DNA by duplex DNA, and the ATP-dependent hybridization of homologous single-stranded DNAs. It interacts with LexA causing its activation and leading to its autocatalytic cleavage. This is Protein RecA from Burkholderia mallei (strain ATCC 23344).